The primary structure comprises 472 residues: Gamma-glutamylputrescine synthetase PuuA (472 aa).

The GS beta-grasp domain maps to 35–129; that stretch reads PNTQYVDVLL…MLLTMVDEDG (95 aa). Residues 136-472 enclose the GS catalytic domain; the sequence is PRNVLNRLWQ…TEIEWMLKNA (337 aa).

It belongs to the glutamine synthetase family. As to quaternary structure, dodecamer. Mg(2+) is required as a cofactor. It depends on Mn(2+) as a cofactor.

It carries out the reaction putrescine + L-glutamate + ATP = gamma-L-glutamylputrescine + ADP + phosphate + H(+). It functions in the pathway amine and polyamine degradation; putrescine degradation; 4-aminobutanoate from putrescine: step 1/4. Involved in the breakdown of putrescine. Catalyzes the ATP-dependent gamma-glutamylation of putrescine, producing gamma-L-glutamylputrescine. Absolutely essential to utilize putrescine as both nitrogen and carbon sources and to decrease the toxicity of putrescine, which can lead to inhibition of cell growth and protein synthesis. In vitro is also able to use several diamines, and spermidine and spermine, instead of putrescine, but with a much lower activity, and cannot catalyze the gamma-glutamylation of ornithine or GABA. In Escherichia coli (strain K12), this protein is Gamma-glutamylputrescine synthetase PuuA.